The primary structure comprises 331 residues: uncharacterized protein (331 aa).

Belongs to the IIV-6 335L family.

This is an uncharacterized protein from Invertebrate iridescent virus 6 (IIV-6).